We begin with the raw amino-acid sequence, 417 residues long: UDP-N-acetylglucosamine 1-carboxyvinyltransferase (417 aa).

22-23 (KN) lines the phosphoenolpyruvate pocket. Position 92 (arginine 92) interacts with UDP-N-acetyl-alpha-D-glucosamine. The active-site Proton donor is the cysteine 116. Cysteine 116 carries the 2-(S-cysteinyl)pyruvic acid O-phosphothioketal modification. Residues 121–125 (RPIDL), aspartate 306, and isoleucine 328 contribute to the UDP-N-acetyl-alpha-D-glucosamine site.

Belongs to the EPSP synthase family. MurA subfamily.

The protein resides in the cytoplasm. It carries out the reaction phosphoenolpyruvate + UDP-N-acetyl-alpha-D-glucosamine = UDP-N-acetyl-3-O-(1-carboxyvinyl)-alpha-D-glucosamine + phosphate. The protein operates within cell wall biogenesis; peptidoglycan biosynthesis. Cell wall formation. Adds enolpyruvyl to UDP-N-acetylglucosamine. This is UDP-N-acetylglucosamine 1-carboxyvinyltransferase from Buchnera aphidicola subsp. Schizaphis graminum (strain Sg).